Consider the following 327-residue polypeptide: tRNA uridine(34) hydroxylase (327 aa).

One can recognise a Rhodanese domain in the interval 123–217 (SDPEVLLVDT…YLEEVKQEES (95 aa)). Catalysis depends on Cys177, which acts as the Cysteine persulfide intermediate.

It belongs to the TrhO family.

The enzyme catalyses uridine(34) in tRNA + AH2 + O2 = 5-hydroxyuridine(34) in tRNA + A + H2O. Catalyzes oxygen-dependent 5-hydroxyuridine (ho5U) modification at position 34 in tRNAs. This is tRNA uridine(34) hydroxylase from Shewanella piezotolerans (strain WP3 / JCM 13877).